The sequence spans 479 residues: Adenylate kinase 8 (479 aa).

Adenylate kinase stretches follow at residues 58–258 (PRVV…TYVQ) and 269–471 (PKVL…SGII). An ATP-binding site is contributed by 67–72 (ASGKTT). Residues 87–113 (TKENLLEREFSLLSLEAKKHYQVYKRV) form an NMP 1 region. AMP is bound by residues 140–143 (GIPE), Q147, and R203. An LID 1 region spans residues 177–206 (GKRIDPVTGEIYHTTFDWPPELEIQNRLIQ). 278–283 (GCGKKL) lines the ATP pocket. The NMP 2 stretch occupies residues 298–327 (SCGQLLKEAMAAESSLGDLIEPFFEKRMTV). AMP contacts are provided by residues 325 to 327 (MTV), 354 to 357 (GFPR), and Q361. The tract at residues 391–424 (LRRTDPVTGERFHLMYKPPPTIEVQARLLQNPKD) is LID 2. R392 lines the ATP pocket.

It belongs to the adenylate kinase family. As to quaternary structure, interacts with CFAP45 and CFAP52; CFAP45 and AK8 dimerization may create a cavity at the interface of the dimer that can accommodate AMP.

It localises to the cytoplasm. Its subcellular location is the cytosol. The protein localises to the cytoskeleton. The protein resides in the cilium axoneme. The catalysed reaction is AMP + ATP = 2 ADP. The enzyme catalyses a 2'-deoxyribonucleoside 5'-diphosphate + ATP = a 2'-deoxyribonucleoside 5'-triphosphate + ADP. It carries out the reaction a ribonucleoside 5'-diphosphate + ATP = a ribonucleoside 5'-triphosphate + ADP. Its function is as follows. Nucleoside monophosphate (NMP) kinase that catalyzes the reversible transfer of the terminal phosphate group between nucleoside triphosphates and monophosphates. Has highest activity toward AMP, and weaker activity toward dAMP, CMP and dCMP. Also displays broad nucleoside diphosphate kinase activity. The protein is Adenylate kinase 8 (Ak8) of Rattus norvegicus (Rat).